The chain runs to 193 residues: Zinc finger protein AZF3 (193 aa).

2 C2H2-type zinc fingers span residues 75 to 97 (YKCG…KASH) and 118 to 140 (HVCS…KRCH).

As to expression, expressed in roots.

The protein resides in the nucleus. In terms of biological role, transcriptional repressor probably involved in abiotic stress responses. Binds DNA in a sequence-specific manner and can repress the transactivation activity of other transcription factors. The chain is Zinc finger protein AZF3 (AZF3) from Arabidopsis thaliana (Mouse-ear cress).